The sequence spans 202 residues: Small ribosomal subunit protein uS4 (202 aa).

A disordered region spans residues 17–42 (ELPGLSRKTPRRAYPPGQHGQARKKR). One can recognise an S4 RNA-binding domain in the interval 90–152 (MRLDNTIFRL…DASRKLIETH (63 aa)).

The protein belongs to the universal ribosomal protein uS4 family. In terms of assembly, part of the 30S ribosomal subunit. Contacts protein S5. The interaction surface between S4 and S5 is involved in control of translational fidelity.

Functionally, one of the primary rRNA binding proteins, it binds directly to 16S rRNA where it nucleates assembly of the body of the 30S subunit. With S5 and S12 plays an important role in translational accuracy. The polypeptide is Small ribosomal subunit protein uS4 (Acaryochloris marina (strain MBIC 11017)).